We begin with the raw amino-acid sequence, 370 residues long: Pantothenate kinase 3 (370 aa).

Glu-138 (proton acceptor) is an active-site residue. Acetyl-CoA-binding residues include Ser-192, Ser-195, and Arg-207.

The protein belongs to the type II pantothenate kinase family. In terms of assembly, homodimer. As to expression, highly expressed in the liver.

Its subcellular location is the cytoplasm. The enzyme catalyses (R)-pantothenate + ATP = (R)-4'-phosphopantothenate + ADP + H(+). Its pathway is cofactor biosynthesis; coenzyme A biosynthesis; CoA from (R)-pantothenate: step 1/5. Its activity is regulated as follows. Subject to allosteric regulation, exists in two distinct conformational states, a catalytically incompetent (or open) conformation stabilized by the binding of acetyl(acyl)-CoA, and a catalytically competent (or closed) conformation stabilized by ATP-binding. Inhibited by acetyl-CoA and its thioesters which act as allosteric inhibitors and compete with the ATP-binding site. Inhibited by sulfonylureas and thiazolidinediones. Activated by oleoylethanolamide, palmitoyl-carnitine and oleoyl-carnitine. Catalyzes the phosphorylation of pantothenate to generate 4'-phosphopantothenate in the first and rate-determining step of coenzyme A (CoA) synthesis. The polypeptide is Pantothenate kinase 3 (PANK3) (Homo sapiens (Human)).